The primary structure comprises 127 residues: Succinate dehydrogenase cytochrome b560 subunit (127 aa).

2 helical membrane-spanning segments follow: residues 36–53 (VGLA…RIIL) and 60–83 (NLLT…FILL). Residue His-88 participates in heme binding. The helical transmembrane segment at 109 to 126 (LSKFSLFLLVSLSLILIF) threads the bilayer.

This sequence belongs to the cytochrome b560 family. Forms part of complex II containing four subunits: a 70 kDa flavoprotein (FP), a 27 kDa iron-sulfur protein (IP), a cytochrome B and a membrane-anchoring protein. The cofactor is heme.

It localises to the mitochondrion inner membrane. It functions in the pathway carbohydrate metabolism; tricarboxylic acid cycle. In terms of biological role, membrane-anchoring subunit of succinate dehydrogenase (SDH) that is involved in complex II of the mitochondrial electron transport chain and is responsible for transferring electrons from succinate to ubiquinone (coenzyme Q). The sequence is that of Succinate dehydrogenase cytochrome b560 subunit (SDH3) from Chondrus crispus (Carrageen Irish moss).